The following is a 173-amino-acid chain: Alpha-crystallin A chain (173 aa).

An N-acetylmethionine modification is found at Met1. Positions 1–63 (MDVTIQHPWF…RTVLDSGISE (63 aa)) are required for complex formation with BFSP1 and BFSP2. Gln6 bears the Deamidated glutamine; partial mark. Ser45 carries the phosphoserine modification. Position 50 is a deamidated glutamine; partial (Gln50). Positions 52 to 162 (LFRTVLDSGI…GHSERAIPVS (111 aa)) constitute a sHSP domain. At Lys99 the chain carries N6-acetyllysine. His100 contacts Zn(2+). Asn101 is subject to Deamidated asparagine; partial. 2 residues coordinate Zn(2+): Glu102 and His107. Position 122 is a phosphoserine (Ser122). Asn123 carries the deamidated asparagine; partial modification. Cys131 and Cys142 are oxidised to a cystine. Positions 146-173 (VQSSMDDGHSERAIPVSREEKPSSVPSS) are disordered. Gln147 carries the deamidated glutamine; partial modification. Over residues 151-167 (DDGHSERAIPVSREEKP) the composition is skewed to basic and acidic residues. His154 provides a ligand contact to Zn(2+). Residue Ser162 is glycosylated (O-linked (GlcNAc) serine).

Belongs to the small heat shock protein (HSP20) family. In terms of assembly, heteromer composed of three CRYAA and one CRYAB subunits. Inter-subunit bridging via zinc ions enhances stability, which is crucial as there is no protein turn over in the lens. Can also form homodimers and homotetramers (dimers of dimers) which serve as the building blocks of homooligomers. Within homooligomers, the zinc-binding motif is created from residues of 3 different molecules. His-100 and Glu-102 from one molecule are ligands of the zinc ion, and His-107 and His-154 residues from additional molecules complete the site with tetrahedral coordination geometry. Part of a complex required for lens intermediate filament formation composed of BFSP1, BFSP2 and CRYAA. Post-translationally, undergoes age-dependent proteolytical cleavage at the C-terminus.

The protein localises to the cytoplasm. The protein resides in the nucleus. In terms of biological role, contributes to the transparency and refractive index of the lens. In its oxidized form (absence of intramolecular disulfide bond), acts as a chaperone, preventing aggregation of various proteins under a wide range of stress conditions. Required for the correct formation of lens intermediate filaments as part of a complex composed of BFSP1, BFSP2 and CRYAA. This is Alpha-crystallin A chain (CRYAA) from Orycteropus afer (Aardvark).